The chain runs to 402 residues: Ubiquitin-like modifier-activating enzyme 5 (402 aa).

The ATP site is built by Gly-81, Asp-102, Lys-125, Asn-148, and Asn-182. 2 residues coordinate Zn(2+): Cys-224 and Cys-227. Cys-248 acts as the Glycyl thioester intermediate in catalysis. Zn(2+)-binding residues include Cys-301 and Cys-306. The tract at residues 369-402 (EAPEKSSETSEETVTTAPPDDASLEDLMAQMKSM) is disordered.

It belongs to the ubiquitin-activating E1 family. UBA5 subfamily.

In terms of biological role, E1-like enzyme which activates UFM1. In Drosophila erecta (Fruit fly), this protein is Ubiquitin-like modifier-activating enzyme 5.